A 254-amino-acid polypeptide reads, in one-letter code: Large ribosomal subunit protein uL2 (254 aa).

The protein belongs to the universal ribosomal protein uL2 family. Component of the large ribosomal subunit. Mature ribosomes consist of a small (40S) and a large (60S) subunit. The 40S subunit contains about 32 different proteins and 1 molecule of RNA (18S). The 60S subunit contains 45 different proteins and 3 molecules of RNA (25S, 5.8S and 5S).

The protein localises to the cytoplasm. In terms of biological role, component of the ribosome, a large ribonucleoprotein complex responsible for the synthesis of proteins in the cell. The small ribosomal subunit (SSU) binds messenger RNAs (mRNAs) and translates the encoded message by selecting cognate aminoacyl-transfer RNA (tRNA) molecules. The large subunit (LSU) contains the ribosomal catalytic site termed the peptidyl transferase center (PTC), which catalyzes the formation of peptide bonds, thereby polymerizing the amino acids delivered by tRNAs into a polypeptide chain. The nascent polypeptides leave the ribosome through a tunnel in the LSU and interact with protein factors that function in enzymatic processing, targeting, and the membrane insertion of nascent chains at the exit of the ribosomal tunnel. This Candida albicans (strain SC5314 / ATCC MYA-2876) (Yeast) protein is Large ribosomal subunit protein uL2.